Here is a 931-residue protein sequence, read N- to C-terminus: Translation initiation factor IF-2 (931 aa).

Residues 32 to 310 (KSASSTVEPP…SSKARKNRLA (279 aa)) are disordered. The segment covering 50 to 59 (FASSGQGNAS) has biased composition (polar residues). Pro residues predominate over residues 82-96 (PAAPSAPKPAAPAAP). The span at 156 to 168 (GNAPQGGNNANGA) shows a compositional bias: low complexity. Gly residues-rich tracts occupy residues 217-238 (RPGQ…GGAK), 248-271 (GQGG…GFQG), and 281-298 (ARGG…GRQG). The tr-type G domain occupies 424-596 (PRPPVVTVMG…VLLTADAELD (173 aa)). Residues 433–440 (GHVDHGKT) form a G1 region. Position 433 to 440 (433 to 440 (GHVDHGKT)) interacts with GTP. Residues 458–462 (GITQR) are G2. The segment at 483 to 486 (DTPG) is G3. Residues 483-487 (DTPGH) and 537-540 (NKID) contribute to the GTP site. Positions 537 to 540 (NKID) are G4. The interval 573-575 (SAK) is G5.

It belongs to the TRAFAC class translation factor GTPase superfamily. Classic translation factor GTPase family. IF-2 subfamily.

It localises to the cytoplasm. One of the essential components for the initiation of protein synthesis. Protects formylmethionyl-tRNA from spontaneous hydrolysis and promotes its binding to the 30S ribosomal subunits. Also involved in the hydrolysis of GTP during the formation of the 70S ribosomal complex. The sequence is that of Translation initiation factor IF-2 from Bifidobacterium adolescentis (strain ATCC 15703 / DSM 20083 / NCTC 11814 / E194a).